A 449-amino-acid chain; its full sequence is METPAMFIKRCSRSIFLQVVIGLVIGVICGVGIPDLAVQMKPLGDGFIKLIKMLIALIVFCVVVNGISGAGDLKKVGRIGLKSVIYFEILTTIALVLGLVVAYSLGLGSGANIHLNELPAGDVALYTGRTQEIHGPVAFLMGLIPTSVFSAFAENDILQVLLFSVLFGSALNLVGEQASGVARLINEFSHIVFRIMGMIVRLAPLGVFGAVAFTTARYGVDSLSHLGALVLVFYATCLVFVMAVLGSVLRLSGVRMLPFLRYFREELMIVMGTASSDAVLPQVMRKLEHMGIRSSTVGLVIPTGYSFNLDGFSIYLTLAVVFIAHVTGTPLAMTDLVTILLVSLVTSKGAHGIPGSALVILAATLTAVPAIPVAGLVLVLSVDWFMGIGRALTNLIGNCVATVTIARWENDIDMPRAQAILDGRLEAPAKADGEPLKRSAVAGEGKLHG.

The next 9 membrane-spanning stretches (helical) occupy residues 14–34 (SIFLQVVIGLVIGVICGVGIP), 47–67 (FIKLIKMLIALIVFCVVVNGI), 83–103 (SVIYFEILTTIALVLGLVVAY), 157–177 (ILQVLLFSVLFGSALNLVGEQ), 195–215 (IMGMIVRLAPLGVFGAVAFTT), 226–246 (LGALVLVFYATCLVFVMAVLG), 312–332 (FSIYLTLAVVFIAHVTGTPLA), 359–379 (VILAATLTAVPAIPVAGLVLV), and 385–405 (FMGIGRALTNLIGNCVATVTI).

It belongs to the dicarboxylate/amino acid:cation symporter (DAACS) (TC 2.A.23) family.

The protein localises to the cell inner membrane. Functionally, responsible for the transport of dicarboxylates such as succinate, fumarate, and malate from the periplasm across the membrane. This is C4-dicarboxylate transport protein 1 from Pseudomonas aeruginosa (strain UCBPP-PA14).